The chain runs to 468 residues: Argininosuccinate lyase (468 aa).

Belongs to the lyase 1 family. Argininosuccinate lyase subfamily.

Its subcellular location is the cytoplasm. It catalyses the reaction 2-(N(omega)-L-arginino)succinate = fumarate + L-arginine. It functions in the pathway amino-acid biosynthesis; L-arginine biosynthesis; L-arginine from L-ornithine and carbamoyl phosphate: step 3/3. The protein is Argininosuccinate lyase of Cutibacterium acnes (strain DSM 16379 / KPA171202) (Propionibacterium acnes).